The following is a 181-amino-acid chain: Respiratory supercomplex factor 1, mitochondrial (181 aa).

Positions 6-97 constitute an HIG1 domain; the sequence is LPSSMEDNPQ…TERQQRREFE (92 aa). The next 2 membrane-spanning stretches (helical) occupy residues 33–49 and 69–86; these read PLIP…LYRA and IYAQ…GMYF. A disordered region spans residues 136-160; sequence AAKEAGKRPAPNKIPEQDAARSAIE.

The protein belongs to the RCF1 family. In terms of assembly, associates with the respiratory chain complex III/complex IV supercomplex.

The protein resides in the mitochondrion membrane. Functionally, cytochrome c oxidase subunit which plays a role in assembly of respiratory supercomplexes. This is Respiratory supercomplex factor 1, mitochondrial (rcf1) from Neosartorya fischeri (strain ATCC 1020 / DSM 3700 / CBS 544.65 / FGSC A1164 / JCM 1740 / NRRL 181 / WB 181) (Aspergillus fischerianus).